We begin with the raw amino-acid sequence, 375 residues long: 4,4'-diaponeurosporenoate glycosyltransferase (375 aa).

4 consecutive transmembrane segments (helical) span residues 3–23, 164–184, 277–297, and 330–350; these read WLSRILTVIVTMSMACGALIF, FYEGFSAIFNLMTVVGMNVFS, IMAAIVLWLFGSIASILGLCL, and FSNLLMVCHPLLFMFFTKIFI.

It belongs to the glycosyltransferase 2 family. CrtQ subfamily.

Its subcellular location is the cell membrane. Its pathway is carotenoid biosynthesis; staphyloxanthin biosynthesis; staphyloxanthin from farnesyl diphosphate: step 4/5. Functionally, catalyzes the glycosylation of 4,4'-diaponeurosporenoate, i.e. the esterification of glucose at the C1'' position with the carboxyl group of 4,4'-diaponeurosporenic acid, to form glycosyl-4,4'-diaponeurosporenoate. This is a step in the biosynthesis of staphyloxanthin, an orange pigment present in most staphylococci strains. This is 4,4'-diaponeurosporenoate glycosyltransferase (crtQ) from Staphylococcus aureus (strain MRSA252).